The following is an 88-amino-acid chain: Small ribosomal subunit protein bS16 (88 aa).

This sequence belongs to the bacterial ribosomal protein bS16 family.

This Pelotomaculum thermopropionicum (strain DSM 13744 / JCM 10971 / SI) protein is Small ribosomal subunit protein bS16.